Reading from the N-terminus, the 651-residue chain is Cysteine-rich receptor-like protein kinase 42 (651 aa).

A signal peptide spans 1–28 (MRCLTKTRSFHYVIIFYSFFFLPFLSSS). Over 29-251 (SDDQRTTVSG…HHKFHVLFNK (223 aa)) the chain is Extracellular. 2 Gnk2-homologous domains span residues 35-135 (TVSG…TYEF) and 137-236 (DESV…DHKF). N-linked (GlcNAc...) asparagine glycans are attached at residues N79 and N151. The helical transmembrane segment at 252–272 (GVIVAIVLTTSAFVMLILLAT) threads the bilayer. Residues 273 to 651 (YVIMTKVSKT…SSESSTTRTI (379 aa)) are Cytoplasmic-facing. A Protein kinase domain is found at 315–604 (FSHKKMLGQG…IPSPTSPPFL (290 aa)). Residues 321-329 (LGQGGNGTV) and K343 contribute to the ATP site. Y388 carries the phosphotyrosine modification. Catalysis depends on D440, which acts as the Proton acceptor. A phosphoserine mark is found at S444 and S473. T474 and T479 each carry phosphothreonine. Residue Y487 is modified to Phosphotyrosine.

It belongs to the protein kinase superfamily. Ser/Thr protein kinase family. CRK subfamily.

The protein localises to the membrane. It carries out the reaction L-seryl-[protein] + ATP = O-phospho-L-seryl-[protein] + ADP + H(+). It catalyses the reaction L-threonyl-[protein] + ATP = O-phospho-L-threonyl-[protein] + ADP + H(+). The chain is Cysteine-rich receptor-like protein kinase 42 (CRK42) from Arabidopsis thaliana (Mouse-ear cress).